A 182-amino-acid polypeptide reads, in one-letter code: ATP-dependent protease subunit HslV (182 aa).

Residue T12 is part of the active site. Positions 167, 170, and 173 each coordinate Na(+).

The protein belongs to the peptidase T1B family. HslV subfamily. A double ring-shaped homohexamer of HslV is capped on each side by a ring-shaped HslU homohexamer. The assembly of the HslU/HslV complex is dependent on binding of ATP.

It is found in the cytoplasm. The catalysed reaction is ATP-dependent cleavage of peptide bonds with broad specificity.. With respect to regulation, allosterically activated by HslU binding. Protease subunit of a proteasome-like degradation complex believed to be a general protein degrading machinery. The chain is ATP-dependent protease subunit HslV from Chlorobium chlorochromatii (strain CaD3).